Reading from the N-terminus, the 155-residue chain is uncharacterized protein (155 aa).

An N-terminal signal peptide occupies residues methionine 1–alanine 23.

This sequence to E.coli YfjT.

This is an uncharacterized protein from Escherichia coli (strain K12).